We begin with the raw amino-acid sequence, 459 residues long: Bifunctional protein GlmU (459 aa).

The tract at residues Met-1–Arg-229 is pyrophosphorylase. UDP-N-acetyl-alpha-D-glucosamine-binding positions include Leu-8–Gly-11, Lys-22, Gln-72, and Gly-77–Thr-78. Residue Asp-102 coordinates Mg(2+). The UDP-N-acetyl-alpha-D-glucosamine site is built by Gly-139, Glu-154, Asn-169, and Asn-227. Mg(2+) is bound at residue Asn-227. Residues Val-230 to Asn-250 are linker. The N-acetyltransferase stretch occupies residues Gly-251–Gln-459. Positions 332 and 350 each coordinate UDP-N-acetyl-alpha-D-glucosamine. The active-site Proton acceptor is the His-362. Positions 365 and 376 each coordinate UDP-N-acetyl-alpha-D-glucosamine. Acetyl-CoA contacts are provided by residues Ala-379, Asn-385–Tyr-386, Ser-404, Ala-422, and Arg-439.

This sequence in the N-terminal section; belongs to the N-acetylglucosamine-1-phosphate uridyltransferase family. In the C-terminal section; belongs to the transferase hexapeptide repeat family. As to quaternary structure, homotrimer. Mg(2+) serves as cofactor.

The protein resides in the cytoplasm. It carries out the reaction alpha-D-glucosamine 1-phosphate + acetyl-CoA = N-acetyl-alpha-D-glucosamine 1-phosphate + CoA + H(+). It catalyses the reaction N-acetyl-alpha-D-glucosamine 1-phosphate + UTP + H(+) = UDP-N-acetyl-alpha-D-glucosamine + diphosphate. The protein operates within nucleotide-sugar biosynthesis; UDP-N-acetyl-alpha-D-glucosamine biosynthesis; N-acetyl-alpha-D-glucosamine 1-phosphate from alpha-D-glucosamine 6-phosphate (route II): step 2/2. It participates in nucleotide-sugar biosynthesis; UDP-N-acetyl-alpha-D-glucosamine biosynthesis; UDP-N-acetyl-alpha-D-glucosamine from N-acetyl-alpha-D-glucosamine 1-phosphate: step 1/1. It functions in the pathway bacterial outer membrane biogenesis; LPS lipid A biosynthesis. Its function is as follows. Catalyzes the last two sequential reactions in the de novo biosynthetic pathway for UDP-N-acetylglucosamine (UDP-GlcNAc). The C-terminal domain catalyzes the transfer of acetyl group from acetyl coenzyme A to glucosamine-1-phosphate (GlcN-1-P) to produce N-acetylglucosamine-1-phosphate (GlcNAc-1-P), which is converted into UDP-GlcNAc by the transfer of uridine 5-monophosphate (from uridine 5-triphosphate), a reaction catalyzed by the N-terminal domain. This Streptococcus pneumoniae serotype 19F (strain G54) protein is Bifunctional protein GlmU.